The chain runs to 378 residues: Putative glutamate--cysteine ligase 2 (378 aa).

It belongs to the glutamate--cysteine ligase type 2 family. YbdK subfamily.

It carries out the reaction L-cysteine + L-glutamate + ATP = gamma-L-glutamyl-L-cysteine + ADP + phosphate + H(+). Functionally, ATP-dependent carboxylate-amine ligase which exhibits weak glutamate--cysteine ligase activity. This chain is Putative glutamate--cysteine ligase 2, found in Salinispora tropica (strain ATCC BAA-916 / DSM 44818 / JCM 13857 / NBRC 105044 / CNB-440).